The sequence spans 124 residues: Large ribosomal subunit protein eL22 (124 aa).

Belongs to the eukaryotic ribosomal protein eL22 family. In terms of assembly, component of the large ribosomal subunit. Mature ribosomes consist of a small (40S) and a large (60S) subunit. The 40S subunit contains about 32 different proteins and 1 molecule of RNA (18S). The 60S subunit contains 45 different proteins and 3 molecules of RNA (25S, 5.8S and 5S).

The protein resides in the cytoplasm. Component of the ribosome, a large ribonucleoprotein complex responsible for the synthesis of proteins in the cell. The small ribosomal subunit (SSU) binds messenger RNAs (mRNAs) and translates the encoded message by selecting cognate aminoacyl-transfer RNA (tRNA) molecules. The large subunit (LSU) contains the ribosomal catalytic site termed the peptidyl transferase center (PTC), which catalyzes the formation of peptide bonds, thereby polymerizing the amino acids delivered by tRNAs into a polypeptide chain. The nascent polypeptides leave the ribosome through a tunnel in the LSU and interact with protein factors that function in enzymatic processing, targeting, and the membrane insertion of nascent chains at the exit of the ribosomal tunnel. This is Large ribosomal subunit protein eL22 from Candida albicans (strain SC5314 / ATCC MYA-2876) (Yeast).